The primary structure comprises 216 residues: N-(5'-phosphoribosyl)anthranilate isomerase (216 aa).

This sequence belongs to the TrpF family.

It carries out the reaction N-(5-phospho-beta-D-ribosyl)anthranilate = 1-(2-carboxyphenylamino)-1-deoxy-D-ribulose 5-phosphate. The protein operates within amino-acid biosynthesis; L-tryptophan biosynthesis; L-tryptophan from chorismate: step 3/5. The polypeptide is N-(5'-phosphoribosyl)anthranilate isomerase (Leptospira borgpetersenii serovar Hardjo-bovis (strain JB197)).